The following is a 467-amino-acid chain: MSVRIDEPQLFVSMSKEPTQETVNVGGHHDDSSSNCDERVDDQTEEQKSPPASPDLTANLNVFDLESRQKVVQRLLNSQLNLSNLRAPLNLPPIFQALQGPFSIQQQLLGLASGLTAISPGLDDYDEENTNQGEPEDLTLGGFRKETSVKSEEPSESGINASGPAWSYEEQFKQLYELSDDVKRKEWLDDWLNFMHRIGKPVTRIPIMAKQVLDLYELYRLVVQHGGLVEIINKKLWREITKGLNLPSSITSAAFTLRTQYQKYLYDYECEKEKLSNQSDLQQAIDGNRREAPGRRTAPSFPLPFQLPHAASAAATMLNNQLNGLGMRNDLLDDENTLSLQASGLFGTSYGAEQMAILEAHQRNLERAQRAVQQQVARQSLGLTACSNGNGGNIHNSGRESTSSNDSDIPAKRPKLENDVKTNGASSMRISTKHSDNSKTSMSVSMEINGITYQGVLFALDETVSES.

A disordered region spans residues 1–56 (MSVRIDEPQLFVSMSKEPTQETVNVGGHHDDSSSNCDERVDDQTEEQKSPPASPDL). Residues 27-48 (GHHDDSSSNCDERVDDQTEEQK) show a composition bias toward basic and acidic residues. Residues 181 to 273 (DVKRKEWLDD…YLYDYECEKE (93 aa)) enclose the ARID domain. The 109-residue stretch at 356 to 464 (AILEAHQRNL…GVLFALDETV (109 aa)) folds into the REKLES domain. The segment at 383–441 (LTACSNGNGGNIHNSGRESTSSNDSDIPAKRPKLENDVKTNGASSMRISTKHSDNSKTS) is disordered. Residues 409–420 (IPAKRPKLENDV) show a composition bias toward basic and acidic residues. Polar residues predominate over residues 421–430 (KTNGASSMRI).

In terms of tissue distribution, present in IL2 and URA neurons, and in AVD and PVC interneurons. Present in muscles from head and pharynx (at protein level).

The protein localises to the nucleus. Its function is as follows. Transcription factor. Regulates neuronal subtype identity. Involved in motor neuron fate determination and maintenance, acting as a transcriptional repressor to counteract gene activation by transcription factor unc-3 in a subset of motor neurons. Probably acts by binding to specific promoter elements. Promotes differentiation of URA sensory neurons and prevents them from expressing male-specific CEM neuronal features. Promotes differentiation of AVD and PVC interneurons and their glutamate receptor expression. The protein is AT-rich interactive domain-containing protein cfi-1 (cfi-1) of Caenorhabditis elegans.